The primary structure comprises 314 residues: 4-hydroxy-3-methylbut-2-enyl diphosphate reductase (314 aa).

[4Fe-4S] cluster is bound at residue Cys-12. (2E)-4-hydroxy-3-methylbut-2-enyl diphosphate is bound by residues His-41 and His-74. 2 residues coordinate dimethylallyl diphosphate: His-41 and His-74. 2 residues coordinate isopentenyl diphosphate: His-41 and His-74. Cys-96 serves as a coordination point for [4Fe-4S] cluster. His-124 is a binding site for (2E)-4-hydroxy-3-methylbut-2-enyl diphosphate. A dimethylallyl diphosphate-binding site is contributed by His-124. His-124 contributes to the isopentenyl diphosphate binding site. Glu-126 functions as the Proton donor in the catalytic mechanism. Thr-167 lines the (2E)-4-hydroxy-3-methylbut-2-enyl diphosphate pocket. A [4Fe-4S] cluster-binding site is contributed by Cys-197. Residues Ser-225, Ser-226, Asn-227, and Ser-269 each coordinate (2E)-4-hydroxy-3-methylbut-2-enyl diphosphate. The dimethylallyl diphosphate site is built by Ser-225, Ser-226, Asn-227, and Ser-269. Isopentenyl diphosphate is bound by residues Ser-225, Ser-226, Asn-227, and Ser-269.

The protein belongs to the IspH family. Requires [4Fe-4S] cluster as cofactor.

It carries out the reaction isopentenyl diphosphate + 2 oxidized [2Fe-2S]-[ferredoxin] + H2O = (2E)-4-hydroxy-3-methylbut-2-enyl diphosphate + 2 reduced [2Fe-2S]-[ferredoxin] + 2 H(+). It catalyses the reaction dimethylallyl diphosphate + 2 oxidized [2Fe-2S]-[ferredoxin] + H2O = (2E)-4-hydroxy-3-methylbut-2-enyl diphosphate + 2 reduced [2Fe-2S]-[ferredoxin] + 2 H(+). The protein operates within isoprenoid biosynthesis; dimethylallyl diphosphate biosynthesis; dimethylallyl diphosphate from (2E)-4-hydroxy-3-methylbutenyl diphosphate: step 1/1. It functions in the pathway isoprenoid biosynthesis; isopentenyl diphosphate biosynthesis via DXP pathway; isopentenyl diphosphate from 1-deoxy-D-xylulose 5-phosphate: step 6/6. Functionally, catalyzes the conversion of 1-hydroxy-2-methyl-2-(E)-butenyl 4-diphosphate (HMBPP) into a mixture of isopentenyl diphosphate (IPP) and dimethylallyl diphosphate (DMAPP). Acts in the terminal step of the DOXP/MEP pathway for isoprenoid precursor biosynthesis. The sequence is that of 4-hydroxy-3-methylbut-2-enyl diphosphate reductase from Haemophilus influenzae (strain PittGG).